Here is a 792-residue protein sequence, read N- to C-terminus: Phenylalanine--tRNA ligase beta subunit (792 aa).

Residues 39 to 147 form the tRNA-binding domain; sequence ARTLEKVVVG…ADAPIGKNIQ (109 aa). Residues 400-475 form the B5 domain; it reads PKIPRIILRP…HLYGYDRIPQ (76 aa). Mg(2+) contacts are provided by D453, D459, E462, and E463. The region spanning 697–791 is the FDX-ACB domain; it reads SKFPSIRRDI…LERKFNAKLR (95 aa).

It belongs to the phenylalanyl-tRNA synthetase beta subunit family. Type 1 subfamily. In terms of assembly, tetramer of two alpha and two beta subunits. Requires Mg(2+) as cofactor.

Its subcellular location is the cytoplasm. The enzyme catalyses tRNA(Phe) + L-phenylalanine + ATP = L-phenylalanyl-tRNA(Phe) + AMP + diphosphate + H(+). The chain is Phenylalanine--tRNA ligase beta subunit from Coxiella burnetii (strain RSA 493 / Nine Mile phase I).